Here is a 436-residue protein sequence, read N- to C-terminus: Glutamyl-tRNA reductase (436 aa).

Residues 49 to 52, serine 109, 114 to 116, and glutamine 120 contribute to the substrate site; these read TCNR and EGQ. Cysteine 50 functions as the Nucleophile in the catalytic mechanism. NADP(+) is bound at residue 198–203; sequence GAGRMS.

The protein belongs to the glutamyl-tRNA reductase family. In terms of assembly, homodimer.

The catalysed reaction is (S)-4-amino-5-oxopentanoate + tRNA(Glu) + NADP(+) = L-glutamyl-tRNA(Glu) + NADPH + H(+). It participates in porphyrin-containing compound metabolism; protoporphyrin-IX biosynthesis; 5-aminolevulinate from L-glutamyl-tRNA(Glu): step 1/2. It functions in the pathway porphyrin-containing compound metabolism; chlorophyll biosynthesis. Functionally, catalyzes the NADPH-dependent reduction of glutamyl-tRNA(Glu) to glutamate 1-semialdehyde (GSA). This is Glutamyl-tRNA reductase from Prochlorococcus marinus (strain MIT 9215).